The chain runs to 395 residues: NAD(P)H-quinone oxidoreductase subunit H, chloroplastic (395 aa).

This sequence belongs to the complex I 49 kDa subunit family. NDH is composed of at least 16 different subunits, 5 of which are encoded in the nucleus.

It is found in the plastid. Its subcellular location is the chloroplast thylakoid membrane. It catalyses the reaction a plastoquinone + NADH + (n+1) H(+)(in) = a plastoquinol + NAD(+) + n H(+)(out). It carries out the reaction a plastoquinone + NADPH + (n+1) H(+)(in) = a plastoquinol + NADP(+) + n H(+)(out). Its function is as follows. NDH shuttles electrons from NAD(P)H:plastoquinone, via FMN and iron-sulfur (Fe-S) centers, to quinones in the photosynthetic chain and possibly in a chloroplast respiratory chain. The immediate electron acceptor for the enzyme in this species is believed to be plastoquinone. Couples the redox reaction to proton translocation, and thus conserves the redox energy in a proton gradient. This Staurastrum punctulatum (Green alga) protein is NAD(P)H-quinone oxidoreductase subunit H, chloroplastic.